We begin with the raw amino-acid sequence, 152 residues long: 3-dehydroquinate dehydratase (152 aa).

Y23 acts as the Proton acceptor in catalysis. N75, H81, and D88 together coordinate substrate. H101 functions as the Proton donor in the catalytic mechanism. Residues I102–S103 and R112 each bind substrate.

Belongs to the type-II 3-dehydroquinase family. In terms of assembly, homododecamer.

It carries out the reaction 3-dehydroquinate = 3-dehydroshikimate + H2O. It functions in the pathway metabolic intermediate biosynthesis; chorismate biosynthesis; chorismate from D-erythrose 4-phosphate and phosphoenolpyruvate: step 3/7. Catalyzes a trans-dehydration via an enolate intermediate. This Alkalilimnicola ehrlichii (strain ATCC BAA-1101 / DSM 17681 / MLHE-1) protein is 3-dehydroquinate dehydratase.